The sequence spans 269 residues: Cytochrome c oxidase subunit 3 (269 aa).

The next 7 helical transmembrane spans lie at 19–39 (PWPF…TLYL), 44–64 (HSSV…YLWF), 87–107 (IGFM…FWAF), 135–155 (LEVP…LTYA), 170–190 (GLYM…YEYW), 205–225 (FYFA…LLLA), and 247–267 (IYYW…IYIW).

This sequence belongs to the cytochrome c oxidase subunit 3 family. In terms of assembly, component of the cytochrome c oxidase (complex IV, CIV), a multisubunit enzyme composed of a catalytic core of 3 subunits and several supernumerary subunits. The complex exists as a monomer or a dimer and forms supercomplexes (SCs) in the inner mitochondrial membrane with ubiquinol-cytochrome c oxidoreductase (cytochrome b-c1 complex, complex III, CIII).

The protein resides in the mitochondrion inner membrane. It carries out the reaction 4 Fe(II)-[cytochrome c] + O2 + 8 H(+)(in) = 4 Fe(III)-[cytochrome c] + 2 H2O + 4 H(+)(out). In terms of biological role, component of the cytochrome c oxidase, the last enzyme in the mitochondrial electron transport chain which drives oxidative phosphorylation. The respiratory chain contains 3 multisubunit complexes succinate dehydrogenase (complex II, CII), ubiquinol-cytochrome c oxidoreductase (cytochrome b-c1 complex, complex III, CIII) and cytochrome c oxidase (complex IV, CIV), that cooperate to transfer electrons derived from NADH and succinate to molecular oxygen, creating an electrochemical gradient over the inner membrane that drives transmembrane transport and the ATP synthase. Cytochrome c oxidase is the component of the respiratory chain that catalyzes the reduction of oxygen to water. Electrons originating from reduced cytochrome c in the intermembrane space (IMS) are transferred via the dinuclear copper A center (CU(A)) of subunit 2 and heme A of subunit 1 to the active site in subunit 1, a binuclear center (BNC) formed by heme A3 and copper B (CU(B)). The BNC reduces molecular oxygen to 2 water molecules using 4 electrons from cytochrome c in the IMS and 4 protons from the mitochondrial matrix. This Schizosaccharomyces pombe (strain 972 / ATCC 24843) (Fission yeast) protein is Cytochrome c oxidase subunit 3 (cox3).